The chain runs to 258 residues: MAKRIDVSGLNAYYGSFLAIEDISMTVEPRSVTAFIGPSGCGKSTFLRTLNRMHEVTPGGRVDGKVMLDDENLYGAGIDPVAVRREVGMVFQRPNPFPTMSVYDNVAAGLRLNGKYKKSQLDDVVEKSLRGANLWNEVKDRLNKPGSGLSGGQQQRLCIARAIAVEPNVLLMDEPCSALDPISTLAIEDLIGELKERFTIVIVTHNMQQAARVSDRTAFFNLAAVGQPGKLIEIDETERIFSNPSVQATEDYISGRFG.

Residues 5–247 (IDVSGLNAYY…ERIFSNPSVQ (243 aa)) enclose the ABC transporter domain. 37-44 (GPSGCGKS) lines the ATP pocket.

Belongs to the ABC transporter superfamily. Phosphate importer (TC 3.A.1.7) family. The complex is composed of two ATP-binding proteins (PstB), two transmembrane proteins (PstC and PstA) and a solute-binding protein (PstS).

Its subcellular location is the cell membrane. The enzyme catalyses phosphate(out) + ATP + H2O = ADP + 2 phosphate(in) + H(+). Its function is as follows. Part of the ABC transporter complex PstSACB involved in phosphate import. Responsible for energy coupling to the transport system. The chain is Phosphate import ATP-binding protein PstB from Streptomyces coelicolor (strain ATCC BAA-471 / A3(2) / M145).